The chain runs to 141 residues: ATP synthase epsilon chain (141 aa).

It belongs to the ATPase epsilon chain family. F-type ATPases have 2 components, CF(1) - the catalytic core - and CF(0) - the membrane proton channel. CF(1) has five subunits: alpha(3), beta(3), gamma(1), delta(1), epsilon(1). CF(0) has three main subunits: a, b and c.

The protein resides in the cell membrane. In terms of biological role, produces ATP from ADP in the presence of a proton gradient across the membrane. The sequence is that of ATP synthase epsilon chain from Lactococcus lactis subsp. cremoris (strain SK11).